The chain runs to 586 residues: A-type ATP synthase subunit A (586 aa).

Position 233 to 240 (233 to 240) interacts with ATP; that stretch reads GPFGSGKT.

It belongs to the ATPase alpha/beta chains family. In terms of assembly, has multiple subunits with at least A(3), B(3), C, D, E, F, H, I and proteolipid K(x).

It localises to the cell membrane. The catalysed reaction is ATP + H2O + 4 H(+)(in) = ADP + phosphate + 5 H(+)(out). Functionally, component of the A-type ATP synthase that produces ATP from ADP in the presence of a proton gradient across the membrane. The A chain is the catalytic subunit. The sequence is that of A-type ATP synthase subunit A from Methanococcus aeolicus (strain ATCC BAA-1280 / DSM 17508 / OCM 812 / Nankai-3).